A 212-amino-acid chain; its full sequence is NADH-quinone oxidoreductase subunit I (212 aa).

4Fe-4S ferredoxin-type domains lie at 76 to 105 (RLLE…IITD) and 115 to 144 (LNYS…HGDL). Residues C85, C88, C91, C95, C124, C127, C130, and C134 each coordinate [4Fe-4S] cluster.

The protein belongs to the complex I 23 kDa subunit family. In terms of assembly, NDH-1 is composed of 14 different subunits. Subunits NuoA, H, J, K, L, M, N constitute the membrane sector of the complex. [4Fe-4S] cluster serves as cofactor.

It is found in the cell inner membrane. The catalysed reaction is a quinone + NADH + 5 H(+)(in) = a quinol + NAD(+) + 4 H(+)(out). NDH-1 shuttles electrons from NADH, via FMN and iron-sulfur (Fe-S) centers, to quinones in the respiratory chain. The immediate electron acceptor for the enzyme in this species is believed to be ubiquinone. Couples the redox reaction to proton translocation (for every two electrons transferred, four hydrogen ions are translocated across the cytoplasmic membrane), and thus conserves the redox energy in a proton gradient. This chain is NADH-quinone oxidoreductase subunit I, found in Helicobacter hepaticus (strain ATCC 51449 / 3B1).